A 509-amino-acid polypeptide reads, in one-letter code: DNA nucleotidylexotransferase (509 aa).

A disordered region spans residues 1–25 (MDPLCTASSGPRKKRPRQVGASMAS). The Nuclear localization signal motif lies at 11–17 (PRKKRPR). Residues 27 to 124 (PHDIKFQNLV…KPVEITGKHQ (98 aa)) enclose the BRCT domain. A mediates interaction with DNTTIP2 region spans residues 151–509 (SQYACQRKTT…DYIEPWERNA (359 aa)). The tract at residues 258-262 (VGLKT) is involved in DNA binding. A 2'-deoxyribonucleoside 5'-triphosphate is bound by residues 333-338 (GFRRGK) and 342-345 (HDVD). 3 residues coordinate Mg(2+): Asp-343, Asp-345, and Asp-433. 448–449 (GW) provides a ligand contact to a 2'-deoxyribonucleoside 5'-triphosphate.

It belongs to the DNA polymerase type-X family. Interacts with PRP19 and DNTTIP1. Forms a ternary complex with DNTTIP2 and core histone. Released from this complex by PCNA. Interacts with TRERF1. Mg(2+) is required as a cofactor.

The protein resides in the nucleus. The enzyme catalyses DNA(n) + a 2'-deoxyribonucleoside 5'-triphosphate = DNA(n+1) + diphosphate. Its function is as follows. Template-independent DNA polymerase which catalyzes the random addition of deoxynucleoside 5'-triphosphate to the 3'-end of a DNA initiator. One of the in vivo functions of this enzyme is the addition of nucleotides at the junction (N region) of rearranged Ig heavy chain and T-cell receptor gene segments during the maturation of B- and T-cells. In Bos taurus (Bovine), this protein is DNA nucleotidylexotransferase (DNTT).